Consider the following 563-residue polypeptide: BOS complex subunit NCLN (563 aa).

A signal peptide spans 1–42 (MLEEAGEVLENMLKASCLPLGFIVFLPAVLLLVAPPLPAADA). Topologically, residues 43–522 (AHEFTVYRMQ…VMNAYRVKPA (480 aa)) are lumenal. Asn241 and Asn428 each carry an N-linked (GlcNAc...) asparagine glycan. Residues 523–543 (VFDLLLAVGIAAYLGMAYVAV) form a helical membrane-spanning segment. The Cytoplasmic segment spans residues 544-563 (QHFSLLYKTVQRLLVKAKTQ).

Belongs to the nicastrin family. Component of the back of Sec61 (BOS) complex, composed of NCLN/Nicalin, NOMO (NOMO1, NOMO2 or NOMO3) and TMEM147. The BOS complex is part of the multi-pass translocon (MPT) complex, composed of three subcomplexes, the GEL complex (composed of RAB5IF/OPTI and TMCO1), the BOS complex (composed of NCLN/Nicalin, NOMO and TMEM147) and the PAT complex (composed of WDR83OS/Asterix and CCDC47). The MPT complex associates with the SEC61 complex. Highly expressed in pancreas and skeletal muscle and, at lower levels, in heart.

It localises to the endoplasmic reticulum membrane. Component of the multi-pass translocon (MPT) complex that mediates insertion of multi-pass membrane proteins into the lipid bilayer of membranes. The MPT complex takes over after the SEC61 complex: following membrane insertion of the first few transmembrane segments of proteins by the SEC61 complex, the MPT complex occludes the lateral gate of the SEC61 complex to promote insertion of subsequent transmembrane regions. May antagonize Nodal signaling and subsequent organization of axial structures during mesodermal patterning, via its interaction with NOMO. In Homo sapiens (Human), this protein is BOS complex subunit NCLN.